A 156-amino-acid chain; its full sequence is 6,7-dimethyl-8-ribityllumazine synthase (156 aa).

Residues F22, 56-58, and 80-82 each bind 5-amino-6-(D-ribitylamino)uracil; these read AFE and AVV. 85-86 contributes to the (2S)-2-hydroxy-3-oxobutyl phosphate binding site; sequence ET. The active-site Proton donor is H88. F113 contacts 5-amino-6-(D-ribitylamino)uracil. R127 serves as a coordination point for (2S)-2-hydroxy-3-oxobutyl phosphate.

Belongs to the DMRL synthase family.

It carries out the reaction (2S)-2-hydroxy-3-oxobutyl phosphate + 5-amino-6-(D-ribitylamino)uracil = 6,7-dimethyl-8-(1-D-ribityl)lumazine + phosphate + 2 H2O + H(+). Its pathway is cofactor biosynthesis; riboflavin biosynthesis; riboflavin from 2-hydroxy-3-oxobutyl phosphate and 5-amino-6-(D-ribitylamino)uracil: step 1/2. Catalyzes the formation of 6,7-dimethyl-8-ribityllumazine by condensation of 5-amino-6-(D-ribitylamino)uracil with 3,4-dihydroxy-2-butanone 4-phosphate. This is the penultimate step in the biosynthesis of riboflavin. This Pediococcus pentosaceus (strain ATCC 25745 / CCUG 21536 / LMG 10740 / 183-1w) protein is 6,7-dimethyl-8-ribityllumazine synthase.